A 207-amino-acid polypeptide reads, in one-letter code: Cytochrome c biogenesis ATP-binding export protein CcmA (207 aa).

An ABC transporter domain is found at 4 to 207 (LEARELLCER…RISLTQTGAA (204 aa)). 36–43 (GSNGAGKT) is a binding site for ATP.

Belongs to the ABC transporter superfamily. CcmA exporter (TC 3.A.1.107) family. In terms of assembly, the complex is composed of two ATP-binding proteins (CcmA) and two transmembrane proteins (CcmB).

Its subcellular location is the cell inner membrane. It catalyses the reaction heme b(in) + ATP + H2O = heme b(out) + ADP + phosphate + H(+). Its function is as follows. Part of the ABC transporter complex CcmAB involved in the biogenesis of c-type cytochromes; once thought to export heme, this seems not to be the case, but its exact role is uncertain. Responsible for energy coupling to the transport system. The protein is Cytochrome c biogenesis ATP-binding export protein CcmA of Escherichia coli (strain UTI89 / UPEC).